The primary structure comprises 82 residues: ATP synthase subunit c, chloroplastic (82 aa).

The next 2 membrane-spanning stretches (helical) occupy residues 7-27 (AASV…PGIG) and 57-77 (LAFM…LLFA).

It belongs to the ATPase C chain family. As to quaternary structure, F-type ATPases have 2 components, F(1) - the catalytic core - and F(0) - the membrane proton channel. F(1) has five subunits: alpha(3), beta(3), gamma(1), delta(1), epsilon(1). F(0) has four main subunits: a(1), b(1), b'(1) and c(10-14). The alpha and beta chains form an alternating ring which encloses part of the gamma chain. F(1) is attached to F(0) by a central stalk formed by the gamma and epsilon chains, while a peripheral stalk is formed by the delta, b and b' chains.

The protein localises to the plastid. It localises to the chloroplast thylakoid membrane. Its function is as follows. F(1)F(0) ATP synthase produces ATP from ADP in the presence of a proton or sodium gradient. F-type ATPases consist of two structural domains, F(1) containing the extramembraneous catalytic core and F(0) containing the membrane proton channel, linked together by a central stalk and a peripheral stalk. During catalysis, ATP synthesis in the catalytic domain of F(1) is coupled via a rotary mechanism of the central stalk subunits to proton translocation. Functionally, key component of the F(0) channel; it plays a direct role in translocation across the membrane. A homomeric c-ring of between 10-14 subunits forms the central stalk rotor element with the F(1) delta and epsilon subunits. This is ATP synthase subunit c, chloroplastic from Rhodomonas salina (Cryptomonas salina).